Consider the following 341-residue polypeptide: Phosphoribosylformylglycinamidine cyclo-ligase (341 aa).

It belongs to the AIR synthase family.

The protein localises to the cytoplasm. The catalysed reaction is 2-formamido-N(1)-(5-O-phospho-beta-D-ribosyl)acetamidine + ATP = 5-amino-1-(5-phospho-beta-D-ribosyl)imidazole + ADP + phosphate + H(+). Its pathway is purine metabolism; IMP biosynthesis via de novo pathway; 5-amino-1-(5-phospho-D-ribosyl)imidazole from N(2)-formyl-N(1)-(5-phospho-D-ribosyl)glycinamide: step 2/2. The protein is Phosphoribosylformylglycinamidine cyclo-ligase of Lachnospira eligens (strain ATCC 27750 / DSM 3376 / VPI C15-48 / C15-B4) (Eubacterium eligens).